Consider the following 487-residue polypeptide: N-succinylglutamate 5-semialdehyde dehydrogenase (487 aa).

An NAD(+)-binding site is contributed by 221 to 226 (GSSDTG). Active-site residues include glutamate 244 and cysteine 278.

The protein belongs to the aldehyde dehydrogenase family. AstD subfamily.

The enzyme catalyses N-succinyl-L-glutamate 5-semialdehyde + NAD(+) + H2O = N-succinyl-L-glutamate + NADH + 2 H(+). It participates in amino-acid degradation; L-arginine degradation via AST pathway; L-glutamate and succinate from L-arginine: step 4/5. In terms of biological role, catalyzes the NAD-dependent reduction of succinylglutamate semialdehyde into succinylglutamate. The sequence is that of N-succinylglutamate 5-semialdehyde dehydrogenase from Burkholderia cenocepacia (strain ATCC BAA-245 / DSM 16553 / LMG 16656 / NCTC 13227 / J2315 / CF5610) (Burkholderia cepacia (strain J2315)).